The primary structure comprises 398 residues: MEDYNNQMDHESSGGRGNFLYASPNLGGNYGRAASDHQMGINTFHLQSSGGGGGGGSGDQCNFQSPGTHPINVKTEATTSQHGHPKFQYNNNNNNHHLVSSSRGHQPVVHQLQHNLDLQNDDHSLSSNEVEAIKAKIIAHPQYSNLVEAYMDCQRVGAPSDVVPRLSVARQEFEARQRSSGTSRETSKDPELDQFMEAYYDMLVKYREELTRPIQEAMDFMRRIETQLNMLGNNNNAPPLRIFSPSEDKCEGIGSSEDEQENSGGETEVPEIDPRAEDRELKNHLLRKYSGYLSSLKQELSKKKKKGKLPKEARQKLLSWWELHYKWPYPSESEKVALAESTGLDQKQINNWFINQRKRHWKPSEDMQFMVMDGLHPQNAALYMDGHYTGDVHYRLGP.

Disordered stretches follow at residues 43 to 69 (TFHL…PGTH), 172 to 192 (EFEA…DPEL), and 234 to 277 (NNNA…PRAE). A compositionally biased stretch (gly residues) spans 49 to 58 (SGGGGGGGSG). One can recognise an ELK domain in the interval 280 to 300 (ELKNHLLRKYSGYLSSLKQEL). A DNA-binding region (homeobox; TALE-type) is located at residues 301-364 (SKKKKKGKLP…NQRKRHWKPS (64 aa)).

This sequence belongs to the TALE/KNOX homeobox family. In terms of tissue distribution, expressed only in the stems.

The protein resides in the nucleus. Its function is as follows. Probably binds to the DNA sequence 5'-TGAC-3'. This is Homeobox protein knotted-1-like 1 from Malus domestica (Apple).